Here is a 506-residue protein sequence, read N- to C-terminus: Lysine--tRNA ligase (506 aa).

Glu416 and Glu423 together coordinate Mg(2+).

It belongs to the class-II aminoacyl-tRNA synthetase family. Homodimer. The cofactor is Mg(2+).

Its subcellular location is the cytoplasm. It carries out the reaction tRNA(Lys) + L-lysine + ATP = L-lysyl-tRNA(Lys) + AMP + diphosphate. This Xylella fastidiosa (strain 9a5c) protein is Lysine--tRNA ligase (lysS).